We begin with the raw amino-acid sequence, 224 residues long: Zinc finger protein 22 (224 aa).

A disordered region spans residues 1–34 (MRLAKPKAGISRSSSQGKAYENKRKTGRQRQKWG). 2 positions are modified to N6-acetyllysine: Lys-18 and Lys-23. Ser-49 carries the post-translational modification Phosphoserine. C2H2-type zinc fingers lie at residues 55–77 (YKCT…QKIH), 83–105 (HKCA…RRIH), 111–133 (YKCD…QRIH), 139–161 (YQCD…QRTH), and 167–189 (YQCS…MKVH).

The protein belongs to the krueppel C2H2-type zinc-finger protein family. In terms of tissue distribution, in the embryo, expressed in developing craniofacial structures including dental epithelium of maxillary molar tooth organs, tongue epithelium and muscle, and craniofacial bone osteoblasts. In the adult, expressed in mesoderm-derived tissues such as skeletal muscle, heart, kidney and liver. Intermediate expression in spleen, thymus and brain. Low levels in endoderm-derived tissues such as intestine and colon.

The protein localises to the nucleus. Its function is as follows. Binds DNA through the consensus sequence 5'-CAATG-3'. May be involved in transcriptional regulation and may play a role in tooth formation. The polypeptide is Zinc finger protein 22 (ZNF22) (Homo sapiens (Human)).